A 444-amino-acid polypeptide reads, in one-letter code: Protein translocase subunit SecY (444 aa).

10 consecutive transmembrane segments (helical) span residues 24–44, 77–97, 123–143, 153–173, 181–201, 215–235, 269–289, 318–338, 376–396, and 400–420; these read FFVI…IPGI, ILAL…LLTV, GTLV…PNMV, MFTL…MWLG, IGNG…PKAI, VLLL…VVFM, MAGV…GTLA, YVML…ALVF, LAGA…MVAW, and FYFG…FMAQ.

The protein belongs to the SecY/SEC61-alpha family. Component of the Sec protein translocase complex. Heterotrimer consisting of SecY, SecE and SecG subunits. The heterotrimers can form oligomers, although 1 heterotrimer is thought to be able to translocate proteins. Interacts with the ribosome. Interacts with SecDF, and other proteins may be involved. Interacts with SecA.

It is found in the cell inner membrane. Functionally, the central subunit of the protein translocation channel SecYEG. Consists of two halves formed by TMs 1-5 and 6-10. These two domains form a lateral gate at the front which open onto the bilayer between TMs 2 and 7, and are clamped together by SecE at the back. The channel is closed by both a pore ring composed of hydrophobic SecY resides and a short helix (helix 2A) on the extracellular side of the membrane which forms a plug. The plug probably moves laterally to allow the channel to open. The ring and the pore may move independently. The polypeptide is Protein translocase subunit SecY (Vibrio cholerae serotype O1 (strain ATCC 39315 / El Tor Inaba N16961)).